A 448-amino-acid chain; its full sequence is MTTHKHRRTEKNLCFKQYYKWILCFILTLYFFASFFVDHDQDHRSSTSISKHLLTNHKPKLFASRAMFESKIHDHKLGFTSQQPNIKTDVFNNLKIYVYDLPSKFNKDWLANDRCTNHLFAAEVALHKAFLSLEGDVRTEDPYEADFFFVPVYVSCNFSTINGFPAIGHARSLINDAIKLVSTQYPFWNRTSGSDHVFTATHDFGSCFHTMEDRAIADGVPIFLRNSIILQTFGVTFNHPCQEVENVVIPPYISPESLHKTQKNIPVTKERDIWVFFRGKMELHPKNISGRFYSKRVRTNIWRSYGGDRRFYLQRQRFAGYQSEIARSVFCLCPLGWAPWSPRLVESVALGCVPVIIADGIRLPFPSTVRWPDISLTVAERDVGKLGDILEHVAATNLSVIQRNLEDPSVRRALMFNVPSREGDATWQVLEALSKKLNRSVRRSNSFL.

The Cytoplasmic portion of the chain corresponds to 1-16 (MTTHKHRRTEKNLCFK). A helical; Signal-anchor for type II membrane protein membrane pass occupies residues 17–37 (QYYKWILCFILTLYFFASFFV). The Lumenal portion of the chain corresponds to 38–448 (DHDQDHRSST…RSVRRSNSFL (411 aa)). N-linked (GlcNAc...) asparagine glycans are attached at residues N157, N189, N287, N397, and N438.

It belongs to the glycosyltransferase 47 family. Expressed in developing interfascicular fibers and xylem cells in stems and developing secondary xylem in roots.

It is found in the golgi apparatus membrane. Involved in the synthesis of the hemicellulose glucuronoxylan, a major component of secondary cell walls. Probably involved in the synthesis of the glycosyl sequence at the glucuronoxylan reducing end. The protein is Probable glucuronoxylan glucuronosyltransferase IRX7 (IRX7) of Arabidopsis thaliana (Mouse-ear cress).